We begin with the raw amino-acid sequence, 327 residues long: Porphobilinogen deaminase (327 aa).

C251 carries the post-translational modification S-(dipyrrolylmethanemethyl)cysteine.

It belongs to the HMBS family. Dipyrromethane serves as cofactor.

It carries out the reaction 4 porphobilinogen + H2O = hydroxymethylbilane + 4 NH4(+). Its pathway is porphyrin-containing compound metabolism; protoporphyrin-IX biosynthesis; coproporphyrinogen-III from 5-aminolevulinate: step 2/4. In terms of biological role, tetrapolymerization of the monopyrrole PBG into the hydroxymethylbilane pre-uroporphyrinogen in several discrete steps. This Kluyveromyces lactis (strain ATCC 8585 / CBS 2359 / DSM 70799 / NBRC 1267 / NRRL Y-1140 / WM37) (Yeast) protein is Porphobilinogen deaminase (HEM3).